Consider the following 62-residue polypeptide: Large ribosomal subunit protein eL24 (62 aa).

4 residues coordinate Zn(2+): Cys6, Cys9, Cys32, and Cys36. Residues 6 to 36 (CSFCEGKIEPGCGKKYVKKDGSVMQFCSSKC) form a C4-type zinc finger.

Belongs to the eukaryotic ribosomal protein eL24 family. As to quaternary structure, part of the 50S ribosomal subunit. Forms a cluster with proteins L3 and L14. Zn(2+) is required as a cofactor.

In terms of biological role, binds to the 23S rRNA. This Methanococcus vannielii (strain ATCC 35089 / DSM 1224 / JCM 13029 / OCM 148 / SB) protein is Large ribosomal subunit protein eL24.